A 536-amino-acid chain; its full sequence is Aminopeptidase (536 aa).

Residues 1–24 form the signal peptide; that stretch reads MSNKNNLRYALGALALSVSAASLA. The region spanning 152 to 255 is the PA domain; sequence AGDVTAKVVP…ATYDNGVAWS (104 aa). Residue Thr-196 is modified to Phosphothreonine. Positions 296 and 308 each coordinate Zn(2+). Glu-340 (proton acceptor) is an active-site residue. Zn(2+) is bound by residues Glu-341, Asp-369, and His-467. Cys-465 and Cys-470 are oxidised to a cystine.

This sequence belongs to the peptidase M28 family. M28A subfamily. It depends on Zn(2+) as a cofactor.

Its subcellular location is the secreted. It carries out the reaction Release of an N-terminal amino acid, Xaa-|-Yaa-, in which Xaa is preferably Leu, but may be other amino acids including Pro although not Arg or Lys, and Yaa may be Pro. Amino acid amides and methyl esters are also readily hydrolyzed, but rates on arylamides are exceedingly low.. A secreted aminopeptidase. Acts on free N-terminal amino groups with a very strong preference for Leu in the first position. The sequence is that of Aminopeptidase from Pseudomonas aeruginosa (strain UCBPP-PA14).